Consider the following 162-residue polypeptide: MTIEQDLSRIALQEETLRFDAFDLSTAWVLGKLLHDLASERNLGVAIDITLHSMPVFYIALPGATPDNSNWVRRKRNMVLRYFRSSYASTLRLEKQGKTIEDNGLTGADYAASGGSFPIFVNGTGCIGAVTVSGLPQREDHNLVVEALALTLGHELHNLNLS.

This sequence belongs to the UPF0303 family.

The protein is UPF0303 protein Arad_3071 of Rhizobium rhizogenes (strain K84 / ATCC BAA-868) (Agrobacterium radiobacter).